Consider the following 65-residue polypeptide: Prokaryotic ubiquitin-like protein Pup (65 aa).

The segment covering 1-14 has biased composition (basic and acidic residues); it reads MSGHEQQRPSRREE. The disordered stretch occupies residues 1–35; the sequence is MSGHEQQRPSRREEDVEETPVVPAQAGAQAKESDA. The ARC ATPase binding stretch occupies residues 21 to 59; the sequence is VVPAQAGAQAKESDADVDALLDEIDEVLESNSEEFVRGF. Positions 26-49 form a coiled coil; that stretch reads AGAQAKESDADVDALLDEIDEVLE. Q65 carries the post-translational modification Deamidated glutamine. Q65 participates in a covalent cross-link: Isoglutamyl lysine isopeptide (Gln-Lys) (interchain with K-? in acceptor proteins).

It belongs to the prokaryotic ubiquitin-like protein family. Strongly interacts with the proteasome-associated ATPase ARC through a hydrophobic interface; the interacting region of Pup lies in its C-terminal half. There is one Pup binding site per ARC hexamer ring. Is modified by deamidation of its C-terminal glutamine to glutamate by the deamidase Dop, a prerequisite to the subsequent pupylation process.

Its pathway is protein degradation; proteasomal Pup-dependent pathway. Protein modifier that is covalently attached to lysine residues of substrate proteins, thereby targeting them for proteasomal degradation. The tagging system is termed pupylation. This is Prokaryotic ubiquitin-like protein Pup from Kineococcus radiotolerans (strain ATCC BAA-149 / DSM 14245 / SRS30216).